Reading from the N-terminus, the 59-residue chain is Large ribosomal subunit protein bL32 (59 aa).

Belongs to the bacterial ribosomal protein bL32 family.

This Limosilactobacillus reuteri (strain DSM 20016) (Lactobacillus reuteri) protein is Large ribosomal subunit protein bL32.